We begin with the raw amino-acid sequence, 829 residues long: Probable methyltransferase PMT26 (829 aa).

Over 1–17 (MAQPRYTRIDNRRPSSN) the chain is Cytoplasmic. A helical; Signal-anchor for type II membrane protein membrane pass occupies residues 18 to 38 (YCSTVTVVVFVALCLVGIWMM). The Lumenal segment spans residues 39–829 (TSSSVGPAQN…EVETLTYAIG (791 aa)). Residues 55–258 (DNKDGIKKQM…TSGDLSPPGA (204 aa)) form a disordered region. 4 stretches are compositionally biased toward basic and acidic residues: residues 85–143 (NEDK…DSKS), 151–160 (LDEKKDLKDN), 168–177 (TNEKQTKPET), and 187–231 (ENQK…KENT). N-linked (GlcNAc...) asparagine glycosylation is found at Asn-215, Asn-247, Asn-264, and Asn-270. A compositionally biased stretch (polar residues) spans 241 to 252 (QEGQSKNETSGD). The disordered stretch occupies residues 271–291 (GSFSTQATESKNEKEAQKGSG). Basic and acidic residues predominate over residues 280–291 (SKNEKEAQKGSG). 4 N-linked (GlcNAc...) asparagine glycosylation sites follow: Asn-302, Asn-579, Asn-595, and Asn-756.

Belongs to the methyltransferase superfamily.

The protein resides in the golgi apparatus membrane. This is Probable methyltransferase PMT26 from Arabidopsis thaliana (Mouse-ear cress).